The sequence spans 197 residues: Imidazoleglycerol-phosphate dehydratase (197 aa).

It belongs to the imidazoleglycerol-phosphate dehydratase family.

The protein resides in the cytoplasm. It carries out the reaction D-erythro-1-(imidazol-4-yl)glycerol 3-phosphate = 3-(imidazol-4-yl)-2-oxopropyl phosphate + H2O. The protein operates within amino-acid biosynthesis; L-histidine biosynthesis; L-histidine from 5-phospho-alpha-D-ribose 1-diphosphate: step 6/9. This Rhodopseudomonas palustris (strain TIE-1) protein is Imidazoleglycerol-phosphate dehydratase.